A 1054-amino-acid polypeptide reads, in one-letter code: Topoisomerase 1-associated factor 1 (1054 aa).

Disordered stretches follow at residues K522–A543, R823–E846, E865–L953, and V968–E1054. Over residues R823 to S838 the composition is skewed to basic and acidic residues. Residues K877–T887 show a composition bias toward basic residues. 3 stretches are compositionally biased toward basic and acidic residues: residues S890–T901, E928–L953, and T979–D1017.

This sequence belongs to the timeless family. Component of the fork protection complex (FPC) consisting of TOF1 and CSM3.

It is found in the nucleus. Its function is as follows. Forms a fork protection complex (FPC) with CSM3 and which is required for chromosome segregation during meiosis and DNA damage repair. FPC coordinates leading and lagging strand synthesis and moves with the replication fork. FPC stabilizes replication forks in a configuration that is recognized by replication checkpoint sensors. The protein is Topoisomerase 1-associated factor 1 (TOF1) of Yarrowia lipolytica (strain CLIB 122 / E 150) (Yeast).